Consider the following 197-residue polypeptide: Peptide deformylase (197 aa).

Positions 106 and 148 each coordinate Fe cation. The active site involves E149. Position 152 (H152) interacts with Fe cation.

This sequence belongs to the polypeptide deformylase family. It depends on Fe(2+) as a cofactor.

It carries out the reaction N-terminal N-formyl-L-methionyl-[peptide] + H2O = N-terminal L-methionyl-[peptide] + formate. Its function is as follows. Removes the formyl group from the N-terminal Met of newly synthesized proteins. Requires at least a dipeptide for an efficient rate of reaction. N-terminal L-methionine is a prerequisite for activity but the enzyme has broad specificity at other positions. This Mycobacterium tuberculosis (strain ATCC 25177 / H37Ra) protein is Peptide deformylase.